Reading from the N-terminus, the 657-residue chain is Putative serine protease (657 aa).

The next 3 helical transmembrane spans lie at 4 to 24 (YLAT…LLMP), 46 to 62 (WLLT…PSGT), and 109 to 131 (LLSG…VLML). One can recognise a Peptidase S39 domain in the interval 239 to 434 (QPGSDFVECE…ETDRYARTME (196 aa)). Residues His284, Asp318, and Ser386 each act as for protease activity in the active site. The segment at 513 to 605 (PLGGLPISNG…PPSTGSVPKS (93 aa)) is disordered. Residues 548 to 559 (HTRRRRRNKKKS) show a composition bias toward basic residues. The segment covering 560-569 (KNSETGHGPE) has biased composition (basic and acidic residues). Low complexity predominate over residues 571 to 589 (QSQQQSRPSSPIPDDSAPV).

This sequence belongs to the peptidase S39B family.

The protein localises to the host membrane. Functionally, putative serine protease. The chain is Putative serine protease from Mushroom bacilliform virus (isolate Australia/AUS LF-1) (MBV).